The primary structure comprises 73 residues: MQKLIILLLVAAVLMSTQAVLQEKRPKEKIKFLSKRKTDAEKQQKRLCPDYTDPCSHAHECCSWNCYNGHCTG.

Positions 1 to 19 are cleaved as a signal peptide; the sequence is MQKLIILLLVAAVLMSTQA. A propeptide spanning residues 20 to 44 is cleaved from the precursor; it reads VLQEKRPKEKIKFLSKRKTDAEKQQ. Cystine bridges form between C48–C62, C55–C66, and C61–C71. 4-hydroxyproline occurs at positions 49 and 54. E60 carries the 4-carboxyglutamate modification. 6'-bromotryptophan is present on W64.

In terms of tissue distribution, expressed by the venom duct.

It is found in the secreted. The chain is Conotoxin Asp7/Gla(3)-TxVI from Conus textile (Cloth-of-gold cone).